The chain runs to 83 residues: Small ribosomal subunit protein uS17c (83 aa).

Belongs to the universal ribosomal protein uS17 family. As to quaternary structure, part of the 30S ribosomal subunit.

It localises to the plastid. Its subcellular location is the chloroplast. In terms of biological role, one of the primary rRNA binding proteins, it binds specifically to the 5'-end of 16S ribosomal RNA. This Porphyra purpurea (Red seaweed) protein is Small ribosomal subunit protein uS17c (rps17).